A 134-amino-acid chain; its full sequence is Phosphoribosyl-ATP pyrophosphatase 2 (134 aa).

This sequence belongs to the PRA-PH family.

It is found in the cytoplasm. The catalysed reaction is 1-(5-phospho-beta-D-ribosyl)-ATP + H2O = 1-(5-phospho-beta-D-ribosyl)-5'-AMP + diphosphate + H(+). The protein operates within amino-acid biosynthesis; L-histidine biosynthesis; L-histidine from 5-phospho-alpha-D-ribose 1-diphosphate: step 2/9. In Bradyrhizobium diazoefficiens (strain JCM 10833 / BCRC 13528 / IAM 13628 / NBRC 14792 / USDA 110), this protein is Phosphoribosyl-ATP pyrophosphatase 2 (hisE2).